The chain runs to 330 residues: uncharacterized protein (330 aa).

125–132 (GPPGCGKT) contributes to the ATP binding site.

It belongs to the AAA ATPase family.

This is an uncharacterized protein from Sinorhizobium fredii (strain NBRC 101917 / NGR234).